Consider the following 444-residue polypeptide: Probable polygalacturonase At1g80170 (444 aa).

The signal sequence occupies residues Met-1–Ala-28. 6 PbH1 repeats span residues Cys-208–Val-234, Ser-235–Lys-256, Ser-258–Ser-278, Val-288–Thr-309, Val-317–Gln-338, and Thr-351–Cys-378. Residue Asp-249 is the Proton donor of the active site. The active site involves His-272.

It belongs to the glycosyl hydrolase 28 family. In terms of tissue distribution, expressed in young, mature and dehiscing anthers. Found in stems, but not in roots or in abscission zone of floral organs.

It is found in the secreted. The protein localises to the cell wall. The enzyme catalyses (1,4-alpha-D-galacturonosyl)n+m + H2O = (1,4-alpha-D-galacturonosyl)n + (1,4-alpha-D-galacturonosyl)m.. This Arabidopsis thaliana (Mouse-ear cress) protein is Probable polygalacturonase At1g80170.